The chain runs to 315 residues: Ribosomal RNA small subunit methyltransferase H (315 aa).

Residues 37 to 39 (GGH), Asp57, Phe83, Asp105, and Gln112 each bind S-adenosyl-L-methionine.

It belongs to the methyltransferase superfamily. RsmH family.

It is found in the cytoplasm. It carries out the reaction cytidine(1402) in 16S rRNA + S-adenosyl-L-methionine = N(4)-methylcytidine(1402) in 16S rRNA + S-adenosyl-L-homocysteine + H(+). Functionally, specifically methylates the N4 position of cytidine in position 1402 (C1402) of 16S rRNA. The chain is Ribosomal RNA small subunit methyltransferase H from Pseudomonas entomophila (strain L48).